A 407-amino-acid chain; its full sequence is Putative cystathionine beta-lyase (407 aa).

N6-(pyridoxal phosphate)lysine is present on Lys237.

It belongs to the class-II pyridoxal-phosphate-dependent aminotransferase family. MalY/PatB cystathionine beta-lyase subfamily. Pyridoxal 5'-phosphate serves as cofactor.

It carries out the reaction L,L-cystathionine + H2O = L-homocysteine + pyruvate + NH4(+). The enzyme catalyses an S-substituted L-cysteine + H2O = a thiol + pyruvate + NH4(+). The protein operates within amino-acid biosynthesis; L-methionine biosynthesis via de novo pathway; L-homocysteine from L-cystathionine: step 1/1. This chain is Putative cystathionine beta-lyase, found in Mycobacterium tuberculosis (strain CDC 1551 / Oshkosh).